A 286-amino-acid chain; its full sequence is 4-hydroxybenzoate octaprenyltransferase (286 aa).

7 helical membrane passes run 21 to 40 (GTLL…AGGM), 95 to 115 (ILFV…NGLV), 142 to 162 (FLGV…TGEV), 167 to 187 (WWLF…YAMV), 211 to 231 (IIGL…WSAE), 235 to 255 (LYGL…MLIF), and 266 to 286 (FLNN…DYLI).

It belongs to the UbiA prenyltransferase family. Requires Mg(2+) as cofactor.

It is found in the cell inner membrane. It carries out the reaction all-trans-octaprenyl diphosphate + 4-hydroxybenzoate = 4-hydroxy-3-(all-trans-octaprenyl)benzoate + diphosphate. Its pathway is cofactor biosynthesis; ubiquinone biosynthesis. Its function is as follows. Catalyzes the prenylation of para-hydroxybenzoate (PHB) with an all-trans polyprenyl group. Mediates the second step in the final reaction sequence of ubiquinone-8 (UQ-8) biosynthesis, which is the condensation of the polyisoprenoid side chain with PHB, generating the first membrane-bound Q intermediate 3-octaprenyl-4-hydroxybenzoate. The protein is 4-hydroxybenzoate octaprenyltransferase of Shewanella putrefaciens (strain CN-32 / ATCC BAA-453).